Reading from the N-terminus, the 441-residue chain is Protein kinase C and casein kinase substrate in neurons protein 1 (441 aa).

A phosphoserine mark is found at S2 and S76. The region spanning 10-280 (EEITDSFWEV…AIRGADAQED (271 aa)) is the F-BAR domain. Residues 23-272 (KRTVKRIDDG…HVYRELEQAI (250 aa)) are a coiled coil. At T181 the chain carries Phosphothreonine. The tract at residues 297–380 (PQFEEWNPDL…ANGGANPFED (84 aa)) is disordered. The segment covering 311 to 321 (AKKEKQPKKAE) has biased composition (basic and acidic residues). Over residues 324-355 (TLSNATGAVESTSQAGDRGSVSSYDRGQTYAT) the composition is skewed to polar residues. Residues S343, S345, S346, S358, and S362 each carry the phosphoserine modification. The 60-residue stretch at 382-441 (AKGVRVRALYDYDGQEQDELSFKAGDELTKLGEEDEQGWCRGRLDSGQLGLYPANYVEAI) folds into the SH3 domain. Residue Y391 is modified to Phosphotyrosine. S402 and S427 each carry phosphoserine.

This sequence belongs to the PACSIN family. In terms of assembly, homodimer. May form heterooligomers with other PACSINs. Interacts with both COBL and DBNL. Identified in a complex composed of COBL, PACSIN1 and WASL. Interacts with EHD3. Interacts (via SH3 domain) with SYNJ1 and WASL. Interacts (via SH3 domain) with DNM1; the interaction is reduced by DNM1 phosphorylation. Interacts with DNM2 and DNM3. Interacts with MAPT. Interacts with EHD1. Interacts with TRPV4. Phosphorylated by casein kinase 2 (CK2) and protein kinase C (PKC). Highly expressed in brain. Detected in hippocampus and dorsal root ganglion neurons. Detected in rod photoreceptor terminals in the outer plexiform layer of the retina (at protein level). In CNS neurons, high levels in the pyramidal cells of the hippocampus, Purkinje cells of the cerebellum and large neurons of the cortex and brain stem.

The protein resides in the cytoplasm. The protein localises to the cell projection. Its subcellular location is the synapse. It is found in the synaptosome. It localises to the ruffle membrane. The protein resides in the membrane. The protein localises to the cytoplasmic vesicle membrane. Its subcellular location is the cytosol. It is found in the cell membrane. Functionally, binds to membranes via its F-BAR domain and mediates membrane tubulation. Plays a role in the reorganization of the microtubule cytoskeleton via its interaction with MAPT; this decreases microtubule stability and inhibits MAPT-induced microtubule polymerization. Plays a role in cellular transport processes by recruiting DNM1, DNM2 and DNM3 to membranes. Plays a role in the reorganization of the actin cytoskeleton and in neuron morphogenesis via its interaction with COBL and WASL, and by recruiting COBL to the cell cortex. Plays a role in the regulation of neurite formation, neurite branching and the regulation of neurite length. Required for normal synaptic vesicle endocytosis; this process retrieves previously released neurotransmitters to accommodate multiple cycles of neurotransmission. Required for normal excitatory and inhibitory synaptic transmission. The chain is Protein kinase C and casein kinase substrate in neurons protein 1 (Pacsin1) from Mus musculus (Mouse).